The sequence spans 202 residues: Glycerol-3-phosphate acyltransferase (202 aa).

6 helical membrane passes run 3–23 (NLIIYAFIYLLGSIPFGLILA), 61–81 (IATIILDFAKAAIPLLILKFL), 87–107 (LLWSVAVLAIFGHCFSIYLLF), 118–138 (GAMIVLLPLEVLTAFIVWVVI), 144–164 (ISSLASLAALLAFVISSFIFN), and 167–187 (LEIHTHAPVFIIAFIIIYKHL).

The protein belongs to the PlsY family. Probably interacts with PlsX.

Its subcellular location is the cell inner membrane. It carries out the reaction an acyl phosphate + sn-glycerol 3-phosphate = a 1-acyl-sn-glycero-3-phosphate + phosphate. It functions in the pathway lipid metabolism; phospholipid metabolism. In terms of biological role, catalyzes the transfer of an acyl group from acyl-phosphate (acyl-PO(4)) to glycerol-3-phosphate (G3P) to form lysophosphatidic acid (LPA). This enzyme utilizes acyl-phosphate as fatty acyl donor, but not acyl-CoA or acyl-ACP. This is Glycerol-3-phosphate acyltransferase from Campylobacter jejuni subsp. jejuni serotype O:23/36 (strain 81-176).